The chain runs to 350 residues: tRNA N6-adenosine threonylcarbamoyltransferase (350 aa).

Fe cation is bound by residues histidine 115 and histidine 119. Substrate contacts are provided by residues 137–141 (IISGG), aspartate 170, glycine 183, and asparagine 281. A Fe cation-binding site is contributed by aspartate 309.

It belongs to the KAE1 / TsaD family. Fe(2+) serves as cofactor.

Its subcellular location is the cytoplasm. The enzyme catalyses L-threonylcarbamoyladenylate + adenosine(37) in tRNA = N(6)-L-threonylcarbamoyladenosine(37) in tRNA + AMP + H(+). Functionally, required for the formation of a threonylcarbamoyl group on adenosine at position 37 (t(6)A37) in tRNAs that read codons beginning with adenine. Is involved in the transfer of the threonylcarbamoyl moiety of threonylcarbamoyl-AMP (TC-AMP) to the N6 group of A37, together with TsaE and TsaB. TsaD likely plays a direct catalytic role in this reaction. This chain is tRNA N6-adenosine threonylcarbamoyltransferase, found in Ehrlichia canis (strain Jake).